The primary structure comprises 375 residues: Methylthioribose-1-phosphate isomerase (375 aa).

Substrate is bound by residues 53–55, R90, and Q202; that span reads RGA. D243 functions as the Proton donor in the catalytic mechanism. Residue 253 to 254 participates in substrate binding; that stretch reads NK.

Belongs to the eIF-2B alpha/beta/delta subunits family. MtnA subfamily.

It carries out the reaction 5-(methylsulfanyl)-alpha-D-ribose 1-phosphate = 5-(methylsulfanyl)-D-ribulose 1-phosphate. The protein operates within amino-acid biosynthesis; L-methionine biosynthesis via salvage pathway; L-methionine from S-methyl-5-thio-alpha-D-ribose 1-phosphate: step 1/6. In terms of biological role, catalyzes the interconversion of methylthioribose-1-phosphate (MTR-1-P) into methylthioribulose-1-phosphate (MTRu-1-P). In Rhodospirillum centenum (strain ATCC 51521 / SW), this protein is Methylthioribose-1-phosphate isomerase.